Here is a 263-residue protein sequence, read N- to C-terminus: Type II restriction enzyme TthHB8I (263 aa).

It catalyses the reaction Endonucleolytic cleavage of DNA to give specific double-stranded fragments with terminal 5'-phosphates.. In terms of biological role, a P subtype restriction enzyme that recognizes the double-stranded sequence 5'-TCGA-3' and cleaves after T-1. The polypeptide is Type II restriction enzyme TthHB8I (tthHB8IR) (Thermus thermophilus (strain ATCC 27634 / DSM 579 / HB8)).